The sequence spans 351 residues: Xaa-Pro dipeptidase (351 aa).

Co(2+)-binding residues include aspartate 212, aspartate 223, histidine 287, glutamate 316, and glutamate 330.

It belongs to the peptidase M24B family. Archaeal-type prolidase subfamily. In terms of assembly, homodimer. The cofactor is Co(2+).

The protein localises to the cytoplasm. It catalyses the reaction Xaa-L-Pro dipeptide + H2O = an L-alpha-amino acid + L-proline. Functionally, splits dipeptides with a prolyl in the C-terminal position and a nonpolar amino acid at the N-terminal position. This is Xaa-Pro dipeptidase (pepQ) from Pyrococcus horikoshii (strain ATCC 700860 / DSM 12428 / JCM 9974 / NBRC 100139 / OT-3).